The following is a 415-amino-acid chain: Serine--tRNA ligase (415 aa).

Thr231 to Glu233 contributes to the L-serine binding site. An ATP-binding site is contributed by Arg262 to Glu264. Residue Glu285 coordinates L-serine. An ATP-binding site is contributed by Glu349–Ser352. L-serine is bound at residue Ser383.

The protein belongs to the class-II aminoacyl-tRNA synthetase family. Type-1 seryl-tRNA synthetase subfamily. As to quaternary structure, homodimer. The tRNA molecule binds across the dimer.

It localises to the cytoplasm. It catalyses the reaction tRNA(Ser) + L-serine + ATP = L-seryl-tRNA(Ser) + AMP + diphosphate + H(+). The enzyme catalyses tRNA(Sec) + L-serine + ATP = L-seryl-tRNA(Sec) + AMP + diphosphate + H(+). It participates in aminoacyl-tRNA biosynthesis; selenocysteinyl-tRNA(Sec) biosynthesis; L-seryl-tRNA(Sec) from L-serine and tRNA(Sec): step 1/1. In terms of biological role, catalyzes the attachment of serine to tRNA(Ser). Is also able to aminoacylate tRNA(Sec) with serine, to form the misacylated tRNA L-seryl-tRNA(Sec), which will be further converted into selenocysteinyl-tRNA(Sec). This Helicobacter pylori (strain G27) protein is Serine--tRNA ligase.